Consider the following 358-residue polypeptide: Peptide chain release factor 1 (358 aa).

Gln233 carries the post-translational modification N5-methylglutamine.

The protein belongs to the prokaryotic/mitochondrial release factor family. Methylated by PrmC. Methylation increases the termination efficiency of RF1.

Its subcellular location is the cytoplasm. Its function is as follows. Peptide chain release factor 1 directs the termination of translation in response to the peptide chain termination codons UAG and UAA. This is Peptide chain release factor 1 from Listeria monocytogenes serovar 1/2a (strain ATCC BAA-679 / EGD-e).